The sequence spans 340 residues: N-acetyl-gamma-glutamyl-phosphate reductase (340 aa).

Residue Cys151 is part of the active site.

This sequence belongs to the NAGSA dehydrogenase family. Type 1 subfamily.

The protein localises to the cytoplasm. The enzyme catalyses N-acetyl-L-glutamate 5-semialdehyde + phosphate + NADP(+) = N-acetyl-L-glutamyl 5-phosphate + NADPH + H(+). The protein operates within amino-acid biosynthesis; L-arginine biosynthesis; N(2)-acetyl-L-ornithine from L-glutamate: step 3/4. Its function is as follows. Catalyzes the NADPH-dependent reduction of N-acetyl-5-glutamyl phosphate to yield N-acetyl-L-glutamate 5-semialdehyde. The chain is N-acetyl-gamma-glutamyl-phosphate reductase from Aquifex aeolicus (strain VF5).